Reading from the N-terminus, the 264-residue chain is Thymidylate synthase 2 (264 aa).

Arg-21 lines the dUMP pocket. His-51 contributes to the (6R)-5,10-methylene-5,6,7,8-tetrahydrofolate binding site. 126–127 (RR) lines the dUMP pocket. Catalysis depends on Cys-146, which acts as the Nucleophile. DUMP contacts are provided by residues 166–169 (RSAD), Asn-177, and 207–209 (HIY). Asp-169 is a binding site for (6R)-5,10-methylene-5,6,7,8-tetrahydrofolate. (6R)-5,10-methylene-5,6,7,8-tetrahydrofolate is bound at residue Ser-263.

It belongs to the thymidylate synthase family. Bacterial-type ThyA subfamily. As to quaternary structure, homodimer.

Its subcellular location is the cytoplasm. The catalysed reaction is dUMP + (6R)-5,10-methylene-5,6,7,8-tetrahydrofolate = 7,8-dihydrofolate + dTMP. It participates in pyrimidine metabolism; dTTP biosynthesis. Its function is as follows. Catalyzes the reductive methylation of 2'-deoxyuridine-5'-monophosphate (dUMP) to 2'-deoxythymidine-5'-monophosphate (dTMP) while utilizing 5,10-methylenetetrahydrofolate (mTHF) as the methyl donor and reductant in the reaction, yielding dihydrofolate (DHF) as a by-product. This enzymatic reaction provides an intracellular de novo source of dTMP, an essential precursor for DNA biosynthesis. This is Thymidylate synthase 2 from Bacillus amyloliquefaciens (Bacillus velezensis).